We begin with the raw amino-acid sequence, 492 residues long: Phosphatidylinositol 4-kinase type 2-beta (492 aa).

Residues 1–11 (MEPKQTADARD) show a composition bias toward basic and acidic residues. A disordered region spans residues 1–98 (MEPKQTADAR…SDRENMSGGH (98 aa)). The 336-residue stretch at 127-462 (GVFPERISQG…VQMPRVVVER (336 aa)) folds into the PI3K/PI4K catalytic domain. The G-loop stretch occupies residues 133–139 (ISQGSSG). ATP-binding residues include Ser140 and Lys155. Residues 160–162 (EPY) are important for substrate binding. An important for interaction with membranes region spans residues 168-181 (KWTKYFHKICCPCC). Residues 264 to 267 (QLFV) and 278 to 279 (RK) each bind ATP. The interval 271–279 (KEADYWLRK) is important for interaction with membranes. Positions 308–316 (RNTDRGNDN) are catalytic loop. Residues 353 to 373 (AIDNGLAFPFKHPDEWRAYPF) form an activation loop region. Asp355 is a binding site for ATP. Positions 368–377 (WRAYPFHWAW) are important for interaction with membranes.

This sequence belongs to the PI3/PI4-kinase family. Type II PI4K subfamily.

Its subcellular location is the cytoplasm. It is found in the cytosol. The protein resides in the golgi apparatus membrane. It localises to the endoplasmic reticulum membrane. The protein localises to the cell membrane. Its subcellular location is the early endosome membrane. It carries out the reaction a 1,2-diacyl-sn-glycero-3-phospho-(1D-myo-inositol) + ATP = a 1,2-diacyl-sn-glycero-3-phospho-(1D-myo-inositol 4-phosphate) + ADP + H(+). Functionally, contributes to the overall PI4-kinase activity of the cell. This contribution may be especially significant in plasma membrane, endosomal and Golgi compartments. The phosphorylation of phosphatidylinositol (PI) to PI4P is the first committed step in the generation of phosphatidylinositol 4,5-bisphosphate (PIP2), a precursor of the second messenger inositol 1,4,5-trisphosphate (InsP3). The polypeptide is Phosphatidylinositol 4-kinase type 2-beta (pi4k2b) (Xenopus tropicalis (Western clawed frog)).